We begin with the raw amino-acid sequence, 419 residues long: Serine--tRNA ligase (419 aa).

226–228 (TSE) is an L-serine binding site. ATP-binding positions include 257–259 (RRE) and Val-273. Glu-280 is a binding site for L-serine. Residue 344 to 347 (ELTS) participates in ATP binding. Thr-379 contacts L-serine.

This sequence belongs to the class-II aminoacyl-tRNA synthetase family. Type-1 seryl-tRNA synthetase subfamily. Homodimer. The tRNA molecule binds across the dimer.

The protein resides in the cytoplasm. It carries out the reaction tRNA(Ser) + L-serine + ATP = L-seryl-tRNA(Ser) + AMP + diphosphate + H(+). The catalysed reaction is tRNA(Sec) + L-serine + ATP = L-seryl-tRNA(Sec) + AMP + diphosphate + H(+). Its pathway is aminoacyl-tRNA biosynthesis; selenocysteinyl-tRNA(Sec) biosynthesis; L-seryl-tRNA(Sec) from L-serine and tRNA(Sec): step 1/1. Its function is as follows. Catalyzes the attachment of serine to tRNA(Ser). Is also able to aminoacylate tRNA(Sec) with serine, to form the misacylated tRNA L-seryl-tRNA(Sec), which will be further converted into selenocysteinyl-tRNA(Sec). The polypeptide is Serine--tRNA ligase (Corynebacterium efficiens (strain DSM 44549 / YS-314 / AJ 12310 / JCM 11189 / NBRC 100395)).